The sequence spans 737 residues: Ribosome-releasing factor 2, mitochondrial (737 aa).

Residues methionine 1–tyrosine 29 constitute a mitochondrion transit peptide. Positions serine 31–glutamate 310 constitute a tr-type G domain. GTP-binding positions include alanine 40 to threonine 47, aspartate 104 to histidine 108, and asparagine 158 to aspartate 161.

This sequence belongs to the TRAFAC class translation factor GTPase superfamily. Classic translation factor GTPase family. EF-G/EF-2 subfamily.

It localises to the mitochondrion. Functionally, mitochondrial GTPase that mediates the disassembly of ribosomes from messenger RNA at the termination of mitochondrial protein biosynthesis. Not involved in the GTP-dependent ribosomal translocation step during translation elongation. This Drosophila persimilis (Fruit fly) protein is Ribosome-releasing factor 2, mitochondrial.